The following is a 506-amino-acid chain: Probable alpha-L-arabinofuranosidase B (506 aa).

A signal peptide spans 1–26; it reads MSSGLSLERACAVALGIVASASLVAA. The catalytic stretch occupies residues 27 to 343; sequence GPCDIYSSGG…ADIVAAKYAI (317 aa). 3 cysteine pairs are disulfide-bonded: cysteine 29/cysteine 39, cysteine 89/cysteine 94, and cysteine 184/cysteine 185. Residue asparagine 91 is glycosylated (N-linked (GlcNAc...) asparagine). A substrate-binding site is contributed by aspartate 227. Glutamate 229 (nucleophile) is an active-site residue. Asparagine 230 and glycine 304 together coordinate substrate. Aspartate 305 serves as the catalytic Proton donor. The segment at 344-506 is ABD; it reads ASLTSGPALT…VSWVVSTGFA (163 aa). Residues cysteine 409 and cysteine 447 are joined by a disulfide bond. 8 residues coordinate substrate: histidine 424, asparagine 426, phenylalanine 427, aspartate 443, histidine 471, glutamate 473, leucine 476, and aspartate 496.

Belongs to the glycosyl hydrolase 54 family.

It localises to the secreted. The catalysed reaction is Hydrolysis of terminal non-reducing alpha-L-arabinofuranoside residues in alpha-L-arabinosides.. It participates in glycan metabolism; L-arabinan degradation. Its function is as follows. Alpha-L-arabinofuranosidase involved in the degradation of arabinoxylan, a major component of plant hemicellulose. Able to hydrolyze 1,5-, 1,3- and 1,2-alpha-linkages not only in L-arabinofuranosyl oligosaccharides, but also in polysaccharides containing terminal non-reducing L-arabinofuranoses in side chains, like L-arabinan, arabinogalactan and arabinoxylan. The sequence is that of Probable alpha-L-arabinofuranosidase B (abfB) from Aspergillus flavus (strain ATCC 200026 / FGSC A1120 / IAM 13836 / NRRL 3357 / JCM 12722 / SRRC 167).